Consider the following 479-residue polypeptide: Probable acyl-CoA desaturase (479 aa).

Positions 1–18 are enriched in low complexity; sequence MTAPSATAFSSATTQPTT. The tract at residues 1–28 is disordered; that stretch reads MTAPSATAFSSATTQPTTEGNASMRKRT. Residues 1–61 lie on the Cytoplasmic side of the membrane; that stretch reads MTAPSATAFS…PWTMQNWWRH (61 aa). Residues 62-82 form a helical membrane-spanning segment; sequence LNWLHCMLIFGLPMIAIYGVF. Residues 83–89 lie on the Lumenal side of the membrane; that stretch reads TTPLQTK. Residues 90-110 traverse the membrane as a helical segment; that stretch reads TLIFAIIYYAYSGLGITAGYH. Residues His-110, His-115, His-147, His-150, and His-151 each contribute to the Fe cation site. Residues 110 to 115 carry the Histidine box-1 motif; that stretch reads HRLWSH. The Cytoplasmic portion of the chain corresponds to 111–204; the sequence is RLWSHRAYKA…DPFVMFNHRH (94 aa). A Histidine box-2 motif is present at residues 147 to 151; sequence HRAHH. A helical transmembrane segment spans residues 205–225; sequence FLPIASFMAFIFPSLFCGLLW. Residues 226–229 lie on the Lumenal side of the membrane; it reads GDYR. A helical transmembrane segment spans residues 230–250; sequence GGYFYAGVCRLVFVHHATFCV. Over 251 to 479 the chain is Cytoplasmic; the sequence is NSLAHLIGSQ…QPPIEAAAAN (229 aa). Fe cation-binding residues include His-255, His-284, His-287, and His-288. Residues 284–288 carry the Histidine box-3 motif; that stretch reads HNYHH. The region spanning 357–433 is the Cytochrome b5 heme-binding domain; the sequence is QLPVMEFEDF…LSTYRVAVVR (77 aa). Heme-binding residues include His-390 and His-416.

It belongs to the fatty acid desaturase type 1 family. Requires Fe(2+) as cofactor.

The protein resides in the membrane. It carries out the reaction octadecanoyl-CoA + 2 Fe(II)-[cytochrome b5] + O2 + 2 H(+) = (9Z)-octadecenoyl-CoA + 2 Fe(III)-[cytochrome b5] + 2 H2O. Stearoyl-CoA desaturase that utilizes O(2) and electrons from reduced cytochrome b5 to introduce the first double bond into saturated fatty acyl-CoA substrates. Catalyzes the insertion of a cis double bond at the delta-9 position into fatty acyl-CoA substrates including palmitoyl-CoA and stearoyl-CoA. Contributes to the biosynthesis of membrane phospholipids, cholesterol esters and triglycerides. The polypeptide is Probable acyl-CoA desaturase (Schizosaccharomyces pombe (strain 972 / ATCC 24843) (Fission yeast)).